We begin with the raw amino-acid sequence, 145 residues long: MIALIQRAQQASVSVAGETTGEIGPGLLILLGVEKGDTPESASKLADKVLGYRIFGDENDKMNLNVQQAGGSVLVVSQFTLAADTKKGMRPGFSAGAAPAEAEKLYDYFAACCREKGATTETGRFAADMKVSLINDGPVTFWLQV.

Residues Gly-137–Pro-138 carry the Gly-cisPro motif, important for rejection of L-amino acids motif.

This sequence belongs to the DTD family. Homodimer.

It is found in the cytoplasm. It carries out the reaction glycyl-tRNA(Ala) + H2O = tRNA(Ala) + glycine + H(+). The catalysed reaction is a D-aminoacyl-tRNA + H2O = a tRNA + a D-alpha-amino acid + H(+). Its function is as follows. An aminoacyl-tRNA editing enzyme that deacylates mischarged D-aminoacyl-tRNAs. Also deacylates mischarged glycyl-tRNA(Ala), protecting cells against glycine mischarging by AlaRS. Acts via tRNA-based rather than protein-based catalysis; rejects L-amino acids rather than detecting D-amino acids in the active site. By recycling D-aminoacyl-tRNA to D-amino acids and free tRNA molecules, this enzyme counteracts the toxicity associated with the formation of D-aminoacyl-tRNA entities in vivo and helps enforce protein L-homochirality. The chain is D-aminoacyl-tRNA deacylase from Erwinia tasmaniensis (strain DSM 17950 / CFBP 7177 / CIP 109463 / NCPPB 4357 / Et1/99).